A 505-amino-acid polypeptide reads, in one-letter code: MVTLTGHSLTVEEMKRLLFEREGVTACPDSMQKVAECREAVEKIVEDGKVVYGITTGFGKFSDVLIQKEDVKELQHNLIQSHACGVGDPFPEEVSRGMLILRANTMLKGVSGVRPLVVNMLLELVNRNIHPVIPQQGSLGASGDLAPLSHLALVLLGEGEVFYKGKRVHAMIALTEEGLEPIELEAKEGLALINGTQAMTAQGILSYIEAETLAYQSELIASMTLEGLRGIIDAFDENVHKARGYKEQIEVAQRIRNILQDSKLVTKQGELRVQDAYSLRCIPQVHGASWQVLHYVKEKLEIEMNAATDNPLIFDGGEKVISGGNFHGQPIAFAMDFLKVGMAEIANISERRIERLVNPQLNDLPPFLSPKPGLQSGAMIMQYAAASLVSENKTLAHPASVDSIPSSANQEDHVSMGTIASRHAHQIIQNVRRVLAIEMICAMQAAEYRGIEEMSSATKIFYHQGRQQVPSITNDRIFSTDIENIAHWLKTSPFTLERLNVNATL.

A cross-link (5-imidazolinone (Ala-Gly)) is located at residues 141 to 143 (ASG). Serine 142 bears the 2,3-didehydroalanine (Ser) mark.

The protein belongs to the PAL/histidase family. In terms of processing, contains an active site 4-methylidene-imidazol-5-one (MIO), which is formed autocatalytically by cyclization and dehydration of residues Ala-Ser-Gly.

It is found in the cytoplasm. The catalysed reaction is L-histidine = trans-urocanate + NH4(+). The protein operates within amino-acid degradation; L-histidine degradation into L-glutamate; N-formimidoyl-L-glutamate from L-histidine: step 1/3. This Bacillus cytotoxicus (strain DSM 22905 / CIP 110041 / 391-98 / NVH 391-98) protein is Histidine ammonia-lyase.